Consider the following 178-residue polypeptide: MSEFIPTWKQPSHPETLQVIKGATPYTASARSLVALPAGALFSKITTAIPAPKKTYTSVQTGPGLNIELMSDLVYCNHSCSPSLEFDMSTFEVRVSRDRPLSVGDELTFFYPSTEWDMVQPFNCFCGSQNCLGLIAGSQDMEASVLSRYWLNPHVKDLLAGKQMTVAPESTEEISLKA.

Residues 120–136 form the Post-SET domain; it reads QPFNCFCGSQNCLGLIA. Residues C124, C126, and C131 each contribute to the Zn(2+) site.

The protein belongs to the class V-like SAM-binding methyltransferase superfamily.

It catalyses the reaction L-lysine + 2 S-adenosyl-L-methionine = N(6),N(6)-dimethyl-L-lysine + 2 S-adenosyl-L-homocysteine + 2 H(+). Its pathway is secondary metabolite biosynthesis; terpenoid biosynthesis. Functionally, methyltransferase; part of the gene cluster that mediates the biosynthesis of flavunoidine, an alkaloidal terpenoid with a tetracyclic cage-like core connected to dimethylcadaverine via a C-N bond and acylated with 5,5-dimethyl-L-pipecolate. The tetracyclic core is synthesized by the terpene cyclase flvE and the cytochrome P450 monooxygenase flvD. The terpene cyclase flvE catalyzes the cyclization of farnesyl pyrophosphate (FPP) to form (1R,4R,5S)-(+)-acoradiene and the cytochrome P450 monooxygenase flvD is then responsible for oxidative conversion of (1R,4R,5S)-(+)-acoradiene into the tetracyclic cage present in the final product flavunoidine. In parallel, the N-methyltransferase flvH dimethylates L-lysine to give N,N-dimethyl-L-Lysin which is decarboxylated by flvG to afford dimethylcadaverine. The terpene cyclase-like protein flvF is the enzyme that attaches the dimethylcadaverine precusor at the C-7 of the tetracyclic cage to yield pre-flavunoidine. The cytochrome monooxygenase flvC hydroxylates the C-10 position of pre-flavunoidine whereas the NRPS flvI acylates the terpenoid core at the hydroxylated C-10 with dimethylpipecolate to yield final flavunoidine. The bifunctional enzyme flvA and the dehydrogenase flvB are responsible for the synthesis of the dimethylpipecolate precursor. The PLP-dependent lyase domain of flvA might use L-O-acetyl-homoserine and alpha-keto-isovalerate to form an intermediary ketone that can cyclize intramolecularly to yield an imine. The imine can be reduced by flvB to yield the 6-carboxylated pipecolate. The C-terminal alpha-KG-dependent oxygenase domain of flvA is then proposed to catalyze the decarboxylation to yield dimethylpipecolate. The chain is Methyltransferase flvH from Aspergillus flavus (strain ATCC 200026 / FGSC A1120 / IAM 13836 / NRRL 3357 / JCM 12722 / SRRC 167).